A 244-amino-acid chain; its full sequence is Cell division protein ZapD (244 aa).

It belongs to the ZapD family. Interacts with FtsZ.

Its subcellular location is the cytoplasm. Functionally, cell division factor that enhances FtsZ-ring assembly. Directly interacts with FtsZ and promotes bundling of FtsZ protofilaments, with a reduction in FtsZ GTPase activity. In Shewanella baltica (strain OS223), this protein is Cell division protein ZapD.